A 178-amino-acid chain; its full sequence is Aspartate carbamoyltransferase regulatory chain (178 aa).

Basic and acidic residues predominate over residues 1–15 (MNDREPNQKESKESV). A disordered region spans residues 1-23 (MNDREPNQKESKESVNDAVPRAR). Residues Cys133, Cys138, Cys159, and Cys162 each contribute to the Zn(2+) site.

The protein belongs to the PyrI family. Contains catalytic and regulatory chains. It depends on Zn(2+) as a cofactor.

Its function is as follows. Involved in allosteric regulation of aspartate carbamoyltransferase. This chain is Aspartate carbamoyltransferase regulatory chain, found in Haloquadratum walsbyi (strain DSM 16790 / HBSQ001).